The chain runs to 174 residues: Large ribosomal subunit protein uL10 (174 aa).

This sequence belongs to the universal ribosomal protein uL10 family. In terms of assembly, part of the ribosomal stalk of the 50S ribosomal subunit. The N-terminus interacts with L11 and the large rRNA to form the base of the stalk. The C-terminus forms an elongated spine to which L12 dimers bind in a sequential fashion forming a multimeric L10(L12)X complex.

Forms part of the ribosomal stalk, playing a central role in the interaction of the ribosome with GTP-bound translation factors. The sequence is that of Large ribosomal subunit protein uL10 from Geobacter sulfurreducens (strain ATCC 51573 / DSM 12127 / PCA).